A 330-amino-acid chain; its full sequence is Replication factor C small subunit (330 aa).

Glycine 48–threonine 55 is a binding site for ATP.

This sequence belongs to the activator 1 small subunits family. RfcS subfamily. As to quaternary structure, heteropentamer composed of four small subunits (RfcS) and one large subunit (RfcL). A homotetramer of this subunit interacts with PCNA heterodimer PCNA1-PCNA2.

Its function is as follows. Part of the RFC clamp loader complex which loads the PCNA sliding clamp onto DNA. The complex possesses DNA-dependent ATPase activity. This chain is Replication factor C small subunit (rfcS), found in Saccharolobus solfataricus (strain ATCC 35092 / DSM 1617 / JCM 11322 / P2) (Sulfolobus solfataricus).